The sequence spans 30 residues: Hemocyanin subunit 2 (30 aa).

It belongs to the tyrosinase family. Hemocyanin subfamily. In terms of tissue distribution, hemolymph.

The protein resides in the secreted. It localises to the extracellular space. Its function is as follows. Hemocyanins are copper-containing oxygen carriers occurring freely dissolved in the hemolymph of many mollusks and arthropods. This is Hemocyanin subunit 2 from Homarus americanus (American lobster).